Reading from the N-terminus, the 215-residue chain is uncharacterized protein (215 aa).

2 helical membrane-spanning segments follow: residues 40–60 (VLFP…FCSL) and 72–92 (LIWF…VGYL).

It localises to the mitochondrion membrane. This is an uncharacterized protein from Arabidopsis thaliana (Mouse-ear cress).